A 985-amino-acid chain; its full sequence is Ankyrin repeat domain-containing protein 24 (985 aa).

ANK repeat units lie at residues 52 to 81, 85 to 114, 118 to 147, 151 to 180, and 184 to 213; these read EGKSAFHLAAMRGAAGCLEVMLAQGADVMS, AGYNALHLAAKYGHPECLKQLLEASCVVDI, SGWTALHHAAAGGCLSCSKLLCSFKAHMNP, SGATPLIIAAQMCHTDLCRLLLQQGAATND, and QGRTALMLACEGGSPETVEVLLQGGAQLSI. Disordered regions lie at residues 243–293, 311–360, 386–412, 476–503, and 594–614; these read RSSP…DRDA, IRGL…LGRE, QDEEGEMPDFPGADALMPKNQSPSAEE, YTEAMHSQQQQQEGEPPRAQEGEETAYQ, and DNAESEPVAAEDTGGKENPGM. Residues 291 to 488 are a coiled coil; that stretch reads RDAYEEIVRL…AMHSQQQQQE (198 aa). Composition is skewed to basic and acidic residues over residues 311–326 and 349–360; these read IRGLEQHKERRRKEPL and EKQEEKESLGRE.

In terms of assembly, homodimer. Interacts (via C-terminal domain) with TRIOBP (via C-terminal domain) isoform 4; recruits TRIOBP isoform 4 to stereocilia rootlets. Expressed in vestibular hair bundles.

The protein localises to the cell membrane. Its subcellular location is the cell projection. It is found in the stereocilium. Its function is as follows. Component of the stereocilia rootlet in hair cells of inner ear. Bridges the apical plasma membrane with the lower rootlet and maintains normal distribution of TRIOBP, thereby reinforcing stereocilia insertion points and organizing rootlets for hearing with long-term resilience. The polypeptide is Ankyrin repeat domain-containing protein 24 (Ankrd24) (Mus musculus (Mouse)).